An 803-amino-acid chain; its full sequence is Mechanosensitive cation channel TMEM63A (803 aa).

Residues 1–51 are Extracellular-facing; it reads MTDSPFLELWQSRTVAIRERLGIGDQPNDSYCYNSAKNSTVLQGVTFGGIP. Residues 52 to 74 form a helical membrane-spanning segment; it reads TVLFIDVSCFLFLIVVFSIIRRK. At 75–133 the chain is on the cytoplasmic side; it reads FWDYGRIALVSEGNSESRFRRLSSSSSGQQDFESELGCCSWLTAIFRLHDDQILEWCGE. The chain crosses the membrane as a helical span at residues 134-166; sequence DAIHYLSFQRHIIFLLVVVSCLSLCIILPVNLS. Residues 167–190 are Extracellular-facing; the sequence is GDLLDKDPYSFGRTTIANLQTDNN. The chain crosses the membrane as a helical span at residues 191-216; the sequence is LLWLHTIFAILYLILTVVFMRHHTQS. Topologically, residues 217 to 415 are cytoplasmic; it reads IKYKEESLVR…CWKNLSIQGF (199 aa). The interval 218-413 is intracellular linker IL2; confers mechanosensitivity; sequence KYKEESLVRR…DICWKNLSIQ (196 aa). The chain crosses the membrane as a helical span at residues 416 to 443; the sequence is RWWFQWLGINFILFVGLFFLTTPSIILS. At 444-461 the chain is on the extracellular side; sequence TMDKFNVTKPIHALNDPI. Residues 462–489 form a helical membrane-spanning segment; it reads ISQFFPTLLLWSFSALLPTIVCYSTLLE. Over 490–494 the chain is Cytoplasmic; that stretch reads SHWTK. The chain crosses the membrane as a helical span at residues 495-531; sequence SGENRIMMTKVYIFLIFMVLILPSLGLTSLDFFFRWL. At 532–553 the chain is on the extracellular side; the sequence is FDKTSSEASIRLECVFLPDQGA. Residues 554–585 form a helical membrane-spanning segment; sequence FFVNYVIASAFIGNGMELLRLPGLILYTFRMV. The tract at residues 554–585 is gating helix; sequence FFVNYVIASAFIGNGMELLRLPGLILYTFRMV. At 586–605 the chain is on the cytoplasmic side; sequence MAKTAADRRNVKQHQAFEYE. Residues 606 to 623 traverse the membrane as a helical segment; sequence FGAMYAWMLCVFTVIMAY. Topologically, residues 624–627 are extracellular; that stretch reads SITC. A helical transmembrane segment spans residues 628–650; the sequence is PIIVPFGLIYILLKHMVDRHNLY. At 651–660 the chain is on the cytoplasmic side; the sequence is FAYLPAKLEK. Residues 661 to 688 form a helical membrane-spanning segment; that stretch reads RIHFAAVNQALAAPILCLFWLYFFSFLR. Over 689–693 the chain is Extracellular; that stretch reads LGLKA. The chain crosses the membrane as a helical span at residues 694-708; the sequence is PLTLFTFLVLLLTIL. Residues 709–803 are Cytoplasmic-facing; that stretch reads VCLAYTCFGC…DSVAAADQED (95 aa).

This sequence belongs to the CSC1 (TC 1.A.17) family. As to quaternary structure, (Microbial infection) Interacts with H.contortus GAL-1 (via domain galectin 1).

The protein resides in the lysosome membrane. Its subcellular location is the early endosome membrane. It localises to the cell membrane. It carries out the reaction Ca(2+)(in) = Ca(2+)(out). Its function is as follows. Mechanosensitive cation channel with low conductance and high activation threshold. In contrast to TMEM63B, does not show phospholipid scramblase activity. Acts as a regulator of lysosomal morphology by mediating lysosomal mechanosensitivity. Important for the baby's first breath and respiration throughout life. Upon lung inflation conducts cation currents in alveolar type 1 and 2 cells triggering lamellar body exocytosis and surfactant secretion into airspace. Also acts as an osmosensitive cation channel preferentially activated by hypotonic stress. Functionally, (Microbial infection) Involved in the immunomodulatory effects exerted by H.contortus GAL-1 on host peripheral blood mononuclear cells to down-regulate host immune response. This is Mechanosensitive cation channel TMEM63A (TMEM63A) from Capra hircus (Goat).